The following is a 322-amino-acid chain: Secretion system apparatus protein SsaQ (322 aa).

The protein belongs to the FliN/MopA/SpaO family.

Part of a type III secretion system. The chain is Secretion system apparatus protein SsaQ (ssaQ) from Salmonella typhimurium (strain LT2 / SGSC1412 / ATCC 700720).